We begin with the raw amino-acid sequence, 336 residues long: Fructose-1,6-bisphosphatase class 1 (336 aa).

Mg(2+) is bound by residues Glu92, Asp115, Leu117, and Asp118. Substrate contacts are provided by residues 118-121 (DGSS), Asn211, Tyr244, 262-264 (YLY), and Lys274. Mg(2+) is bound at residue Glu280.

This sequence belongs to the FBPase class 1 family. Homotetramer. The cofactor is Mg(2+).

Its subcellular location is the cytoplasm. It carries out the reaction beta-D-fructose 1,6-bisphosphate + H2O = beta-D-fructose 6-phosphate + phosphate. Its pathway is carbohydrate biosynthesis; gluconeogenesis. The chain is Fructose-1,6-bisphosphatase class 1 from Vibrio cholerae serotype O1 (strain ATCC 39541 / Classical Ogawa 395 / O395).